The following is a 458-amino-acid chain: Putative non-structural protein 2 (458 aa).

Residues 1–12 (MSDTNEENRDEP) are compositionally biased toward basic and acidic residues. Residues 1–27 (MSDTNEENRDEPTVVIVGPNDAQTETT) form a disordered region.

This chain is Putative non-structural protein 2 (S8), found in Micromonas pusilla (Picoplanktonic green alga).